The sequence spans 268 residues: Small ribosomal subunit protein uS3 (268 aa).

The KH type-2 domain occupies 39–107 (VREYLKKKLK…PVHVNIEEIR (69 aa)). The disordered stretch occupies residues 216 to 268 (VEEVAEEKRPRRNARPGGDRRPRRDGEGGGPAGARRGAPRRAGGAGGDGKTGE). Basic and acidic residues predominate over residues 232-242 (GGDRRPRRDGE). Over residues 248–257 (GARRGAPRRA) the composition is skewed to low complexity. Gly residues predominate over residues 258 to 268 (GGAGGDGKTGE).

This sequence belongs to the universal ribosomal protein uS3 family. As to quaternary structure, part of the 30S ribosomal subunit. Forms a tight complex with proteins S10 and S14.

Binds the lower part of the 30S subunit head. Binds mRNA in the 70S ribosome, positioning it for translation. This chain is Small ribosomal subunit protein uS3, found in Paraburkholderia phytofirmans (strain DSM 17436 / LMG 22146 / PsJN) (Burkholderia phytofirmans).